We begin with the raw amino-acid sequence, 525 residues long: GMP synthase [glutamine-hydrolyzing] (525 aa).

The 200-residue stretch at 8-207 folds into the Glutamine amidotransferase type-1 domain; sequence KILILDFGSQ…VMDICGCDNK (200 aa). Cys85 (nucleophile) is an active-site residue. Active-site residues include His181 and Glu183. One can recognise a GMPS ATP-PPase domain in the interval 208–400; that stretch reads WQPASIIEDA…LGLPYDMLYR (193 aa). Residue 235–241 coordinates ATP; the sequence is SGGVDSS.

In terms of assembly, homodimer.

The catalysed reaction is XMP + L-glutamine + ATP + H2O = GMP + L-glutamate + AMP + diphosphate + 2 H(+). It functions in the pathway purine metabolism; GMP biosynthesis; GMP from XMP (L-Gln route): step 1/1. Its function is as follows. Catalyzes the synthesis of GMP from XMP. The chain is GMP synthase [glutamine-hydrolyzing] from Shewanella amazonensis (strain ATCC BAA-1098 / SB2B).